Consider the following 190-residue polypeptide: Pyridoxal 5'-phosphate synthase subunit PdxT (190 aa).

Gly46–Ser48 is an L-glutamine binding site. Cys78 serves as the catalytic Nucleophile. Residues Arg108 and Ile137–Arg138 each bind L-glutamine. Active-site charge relay system residues include His174 and Glu176.

This sequence belongs to the glutaminase PdxT/SNO family. In the presence of PdxS, forms a dodecamer of heterodimers. Only shows activity in the heterodimer.

The enzyme catalyses aldehydo-D-ribose 5-phosphate + D-glyceraldehyde 3-phosphate + L-glutamine = pyridoxal 5'-phosphate + L-glutamate + phosphate + 3 H2O + H(+). It catalyses the reaction L-glutamine + H2O = L-glutamate + NH4(+). It functions in the pathway cofactor biosynthesis; pyridoxal 5'-phosphate biosynthesis. Catalyzes the hydrolysis of glutamine to glutamate and ammonia as part of the biosynthesis of pyridoxal 5'-phosphate. The resulting ammonia molecule is channeled to the active site of PdxS. The polypeptide is Pyridoxal 5'-phosphate synthase subunit PdxT (Chloroflexus aurantiacus (strain ATCC 29366 / DSM 635 / J-10-fl)).